We begin with the raw amino-acid sequence, 215 residues long: MLQVYLVRHGETQWNAERRIQGQSDSPLTAKGEQQAMQVGERARSLGITHIISSDLGRTKRTAEIIAQACGCDITFDFRLRELDMGVLEKRQIDSLTEEEEGWRRQLVNGTQDGRIPGGESMQELSDRVHAALASCLELPQGSRPLLVSHGIALGCLVSTILGLPAWAERRLRLRNCSISRIDYQESQWLASGWVVETAGDVSHLDTPALDELQR.

Residues 8–15, 21–22, Arg-58, Lys-60, 82–85, 104–105, and 151–152 contribute to the substrate site; these read RHGETQWN, QG, ELDM, RR, and GI. The active-site Tele-phosphohistidine intermediate is His-9. The Proton donor/acceptor role is filled by Glu-82.

It belongs to the phosphoglycerate mutase family. GpmB subfamily.

The catalysed reaction is (2R)-2-phosphoglycerate = (2R)-3-phosphoglycerate. The protein operates within carbohydrate degradation; glycolysis; pyruvate from D-glyceraldehyde 3-phosphate: step 3/5. The protein is Probable phosphoglycerate mutase GpmB of Salmonella typhi.